The chain runs to 555 residues: MSVQTVSIQPFTDQKPGTSGLRKKVKVFQQPHYSEAFVTSILLSIPEGAEGAFLVIGGDGRYYNPEVIQKIAKISAAYGVKKLLIGQNGILSTPAASNLIRVRKATGGILLTASHNPGGPNADFGIKYNLCNGAPAPESVTNKIYETSKSLTSYKIAEIPDVDTSTIGTKTYGPLEVEIVHSTSDYLKMLKEIFDFDLIKEFLSTHKDFKVLFDGMHGVTGPYGVDIFVKELGLPQDSTMNCVPSPDFNGGHPDPNLVYAHELVEAVDKKGIHFGAASDGDGDRNMIYGANTFVSPGDSLAIIAHHAKLIPWFQKQGVYGLARSMPTSGAVDLVAKAQGLQSYEVPTGWKFFCNLFDNKKISICGEESFGTGSNHIREKDGVWAIVAWLNIIAGVAKQKPNETPSIASIQNEFWQTYGRTFFTRYDYENVDSDAANKLIANLSEKINNKDSFVGSTVSGRKVADAGNFAYTDLDGSVTKNQGLYVKFDDGSRLVVRLSGTGSSGATIRLYIEKYESDKSKFGMNTQDYLKDNVALAMSLLKFKEYIGREDPDVKT.

R22 and S114 together coordinate alpha-D-glucose 1,6-bisphosphate. Catalysis depends on S114, which acts as the Phosphoserine intermediate. Mg(2+) contacts are provided by S114, D279, D281, and D283. S114 carries the post-translational modification Phosphoserine. The alpha-D-glucose 1,6-bisphosphate site is built by D283, R284, T347, E366, S368, and K379.

Belongs to the phosphohexose mutase family. Monomer. The cofactor is Mg(2+).

It localises to the cytoplasm. The enzyme catalyses alpha-D-glucose 1-phosphate = alpha-D-glucose 6-phosphate. It catalyses the reaction O-phospho-L-seryl-[protein] + alpha-D-glucose 1-phosphate = alpha-D-glucose 1,6-bisphosphate + L-seryl-[protein]. The catalysed reaction is alpha-D-glucose 1,6-bisphosphate + L-seryl-[protein] = O-phospho-L-seryl-[protein] + alpha-D-glucose 6-phosphate. Functionally, catalyzes the reversible isomerization of alpha-D-glucose 1-phosphate to alpha-D-glucose 6-phosphate. The mechanism proceeds via the intermediate compound alpha-D-glucose 1,6-bisphosphate. Key enzyme in hexose metabolism. The reverse reaction is an essential step for biosynthesis because glucose 1-phosphate is the starting point for the synthesis of UDP-glucose, which acts as a precursor for the synthesis of oligosaccharides and trehalose. The polypeptide is Phosphoglucomutase (pgmA) (Aspergillus fumigatus (strain ATCC MYA-4609 / CBS 101355 / FGSC A1100 / Af293) (Neosartorya fumigata)).